A 155-amino-acid chain; its full sequence is Transcriptional repressor NrdR (155 aa).

The segment at cysteine 3–cysteine 34 is a zinc-finger region. An ATP-cone domain is found at leucine 49 to serine 139.

This sequence belongs to the NrdR family. Zn(2+) serves as cofactor.

Functionally, negatively regulates transcription of bacterial ribonucleotide reductase nrd genes and operons by binding to NrdR-boxes. In Lactobacillus delbrueckii subsp. bulgaricus (strain ATCC 11842 / DSM 20081 / BCRC 10696 / JCM 1002 / NBRC 13953 / NCIMB 11778 / NCTC 12712 / WDCM 00102 / Lb 14), this protein is Transcriptional repressor NrdR.